Here is a 486-residue protein sequence, read N- to C-terminus: Acetyl-coenzyme A carboxylase carboxyl transferase subunit beta, chloroplastic (486 aa).

The CoA carboxyltransferase N-terminal domain maps to 224–486; it reads LWVQCENCYG…FQFHGFFPRP (263 aa). Positions 228, 231, 247, and 250 each coordinate Zn(2+). Residues 228–250 form a C4-type zinc finger; that stretch reads CENCYGLNYKKFFSSKMNICEQC.

Belongs to the AccD/PCCB family. Acetyl-CoA carboxylase is a heterohexamer composed of biotin carboxyl carrier protein, biotin carboxylase and 2 subunits each of ACCase subunit alpha and ACCase plastid-coded subunit beta (accD). The cofactor is Zn(2+).

It localises to the plastid. Its subcellular location is the chloroplast stroma. The catalysed reaction is N(6)-carboxybiotinyl-L-lysyl-[protein] + acetyl-CoA = N(6)-biotinyl-L-lysyl-[protein] + malonyl-CoA. It functions in the pathway lipid metabolism; malonyl-CoA biosynthesis; malonyl-CoA from acetyl-CoA: step 1/1. Component of the acetyl coenzyme A carboxylase (ACC) complex. Biotin carboxylase (BC) catalyzes the carboxylation of biotin on its carrier protein (BCCP) and then the CO(2) group is transferred by the transcarboxylase to acetyl-CoA to form malonyl-CoA. This Nymphaea alba (White water-lily) protein is Acetyl-coenzyme A carboxylase carboxyl transferase subunit beta, chloroplastic.